We begin with the raw amino-acid sequence, 24 residues long: Large ribosomal subunit protein uL10 (24 aa).

This sequence belongs to the universal ribosomal protein uL10 family. In terms of assembly, part of the ribosomal stalk of the 50S ribosomal subunit. The N-terminus interacts with L11 and the large rRNA to form the base of the stalk. The C-terminus forms an elongated spine to which L12 dimers bind in a sequential fashion forming a multimeric L10(L12)X complex.

Functionally, forms part of the ribosomal stalk, playing a central role in the interaction of the ribosome with GTP-bound translation factors. This is Large ribosomal subunit protein uL10 (rplJ) from Enterobacter cloacae.